The sequence spans 204 residues: Ancillary SecYEG translocon subunit (204 aa).

At 1–23 (MAYSIEEEQEINQLKDWWKENGK) the chain is on the cytoplasmic side. The chain crosses the membrane as a helical span at residues 24–42 (TIIVAFILGVGGMFGWRYW). The Periplasmic portion of the chain corresponds to 43-204 (QTHQAEQIAQ…QMAKMKLNNL (162 aa)).

It belongs to the YfgM family. In terms of assembly, interacts with the SecYEG translocon. Forms a complex with PpiD.

The protein localises to the cell inner membrane. Functionally, may mediate protein transfer from the SecYEG translocon to the periplasmic chaperone network via its periplasmic C-terminal region. The sequence is that of Ancillary SecYEG translocon subunit from Haemophilus influenzae (strain ATCC 51907 / DSM 11121 / KW20 / Rd).